Here is a 530-residue protein sequence, read N- to C-terminus: Autoinducer-2 kinase (530 aa).

The protein belongs to the FGGY kinase family.

It is found in the cytoplasm. The catalysed reaction is (S)-4,5-dihydroxypentane-2,3-dione + ATP = (2S)-2-hydroxy-3,4-dioxopentyl phosphate + ADP + H(+). Its function is as follows. Catalyzes the phosphorylation of autoinducer-2 (AI-2) to phospho-AI-2, which subsequently inactivates the transcriptional regulator LsrR and leads to the transcription of the lsr operon. Phosphorylates the ring-open form of (S)-4,5-dihydroxypentane-2,3-dione (DPD), which is the precursor to all AI-2 signaling molecules, at the C5 position. In Escherichia coli (strain SMS-3-5 / SECEC), this protein is Autoinducer-2 kinase.